The following is a 253-amino-acid chain: 5'-nucleotidase SurE (253 aa).

Asp-8, Asp-9, Ser-39, and Asn-91 together coordinate a divalent metal cation.

It belongs to the SurE nucleotidase family. A divalent metal cation is required as a cofactor.

It is found in the cytoplasm. It catalyses the reaction a ribonucleoside 5'-phosphate + H2O = a ribonucleoside + phosphate. Nucleotidase that shows phosphatase activity on nucleoside 5'-monophosphates. The sequence is that of 5'-nucleotidase SurE from Albidiferax ferrireducens (strain ATCC BAA-621 / DSM 15236 / T118) (Rhodoferax ferrireducens).